The chain runs to 235 residues: tRNA (guanine-N(1)-)-methyltransferase (235 aa).

S-adenosyl-L-methionine contacts are provided by residues glycine 112 and 132 to 137 (IGDYVI).

Belongs to the RNA methyltransferase TrmD family. In terms of assembly, homodimer.

It is found in the cytoplasm. It carries out the reaction guanosine(37) in tRNA + S-adenosyl-L-methionine = N(1)-methylguanosine(37) in tRNA + S-adenosyl-L-homocysteine + H(+). Its function is as follows. Specifically methylates guanosine-37 in various tRNAs. The protein is tRNA (guanine-N(1)-)-methyltransferase of Anaplasma marginale (strain St. Maries).